The chain runs to 171 residues: Interleukin-26 (171 aa).

The signal sequence occupies residues 1–21; it reads MLVNFILRCGLLLVTLSLAIA.

This sequence belongs to the IL-10 family. In terms of assembly, homodimer. In terms of tissue distribution, expressed in HVS transformed T-cells but not other T-cell lines or primary stimulated T-cells. Expressed in colonic T-cells including Th17 inflammatory T-cells; the expression is significantly increased in serum of patients with Crohn's disease (at protein level).

It localises to the secreted. Functionally, may play a role in local mechanisms of mucosal immunity and seems to have a pro-inflammatory function. May play a role in inflammatory bowel disease. Activates STAT1 and STAT3, MAPK1/3 (ERK1/2), JUN and AKT. Induces expression of SOCS3, TNF-alpha and IL-8, secretion of IL-8 and IL-10 and surface expression of ICAM1. Decreases proliferation of intestinal epithelial cells. Is inhibited by heparin. The protein is Interleukin-26 (IL26) of Homo sapiens (Human).